A 493-amino-acid polypeptide reads, in one-letter code: MKKIFMMVHELDVNKGGMTSSMFNRSKEFYDADIPADIVTFDYKGNYDEIIKALKKQGKMDRRTKMYNVFEYFKQISNNKHFKSNKLLYKHISERLKNTIEIEESKGISRYFDITTGTYIAYIRKSKSEKVIDFFKDNKRIERFSFIDNKVHMKETFNVDNKVCYQVFYDEKGYPYISRNINANNGAVGKTYVLVNKKEFKNNLALCVYYLEKLIKDSKDSIMICDGPGSFPKMFNTNHKNAQKYGVIHVNHHENFDDTGAFKKSEKYIIENANKINGVIVLTEAQRLDILNQFDVENIFTISNFVKIHNAPKHFQTEKIVGHISRMVPTKRIDLLIEVAELVVKKDNAVKFHIYGEGSVKDKIAKMIEDKNLERNVFLKGYTTTPQKCLEDFKLVVSTSQYEGQGLSMIEAMISKRPVVAFDIKYGPSDFIEDNKNGYLIENHNINDMADKILQLVNNDVLAAEFGSKARENIIEKYSTESILEKWLNLFNS.

UDP-N-acetyl-alpha-D-glucosamine contacts are provided by residues glycine 17, lysine 59, histidine 249, arginine 326, lysine 331, threonine 383, and 403–411; that span reads EGQGLSMIE.

Belongs to the glycosyltransferase group 1 family. As to quaternary structure, homotrimer.

It is found in the cytoplasm. It carries out the reaction 4-O-[(D-ribitylphospho)(n)-di{(2R)-glycerylphospho}]-N-acetyl-beta-D-mannosaminyl-(1-&gt;4)-N-acetyl-alpha-D-glucosaminyl di-trans,octa-cis-undecaprenyl diphosphate + n UDP-N-acetyl-alpha-D-glucosamine = 4-O-([2-N-acetyl-alpha-D-glucosaminyl-1-D-ribitylphospho](n)-di{[2R]-1-glycerylphospho})-N-acetyl-beta-D-mannosaminyl-(1-&gt;4)-N-acetyl-alpha-D-glucosaminyl di-trans,octa-cis-undecaprenyl diphosphate + n UDP + n H(+). The protein operates within cell wall biogenesis; poly(ribitol phosphate) teichoic acid biosynthesis. Its function is as follows. Attaches N-acetyl-alpha-D-glucosamine residues to poly(RboP)-wall teichoic acids (WTAs). The polypeptide is Poly(ribitol-phosphate) alpha-N-acetylglucosaminyltransferase (Staphylococcus aureus (strain COL)).